A 580-amino-acid chain; its full sequence is Bifunctional lycopene cyclase/phytoene synthase (580 aa).

3 consecutive transmembrane segments (helical) span residues 3 to 23 (WEYA…LAAV), 35 to 55 (KLVF…SYLI), and 65 to 85 (GVVV…FFVI). N-linked (GlcNAc...) asparagine glycosylation is present at asparagine 89. 4 consecutive transmembrane segments (helical) span residues 116–136 (IAGQ…VSSG), 139–159 (GMYM…LWSI), 171–191 (NTAL…TFAL), and 214–234 (IEEA…LIAC).

It in the N-terminal section; belongs to the lycopene beta-cyclase family. In the C-terminal section; belongs to the phytoene/squalene synthase family.

It is found in the membrane. The catalysed reaction is all-trans-lycopene = gamma-carotene. It catalyses the reaction gamma-carotene = all-trans-beta-carotene. It carries out the reaction 2 (2E,6E,10E)-geranylgeranyl diphosphate = 15-cis-phytoene + 2 diphosphate. It participates in carotenoid biosynthesis; beta-carotene biosynthesis. It functions in the pathway carotenoid biosynthesis; phytoene biosynthesis; all-trans-phytoene from geranylgeranyl diphosphate: step 1/1. In terms of biological role, bifunctional enzyme; part of the car gene cluster that mediates the biosynthesis of neurosporaxanthin, a carboxylic apocarotenoid acting as an essential protective pigments and leading to orange pigmentation. CarAR catalyzes the first step of the pathway by converting geranylgeranyl diphosphate to phytoene, as well as the later cyclization step that transforms the carB product lycopene into gamma-carotene. CarAR also converts part of gamma-carotene into beta-carotene. Neurosporaxanthin is synthesized from geranyl-geranyl pyrophosphate (GGPP) through several enzymatic activities. Phytoene synthase activity performed by the bifunctional enzyme carAR first produces phytoene from geranyl-geranyl pyrophosphate (GGPP). The phytoene dehydrogenase carB then introduces 4 desaturations to lead to lycopene which is substrate of the carotene cyclase activity of carAR that leads to the production of gamma-carotene. CarB then performs a 5th desaturation reaction to yield torulene. Torulene is the substrate of the dioxidase carT that breaks the molecule, removing five carbon atoms to yield beta-apo-4'-carotenal, whereas the aldehyde dehydrogenase carD mediates the last step by converting beta-apo-4'-carotenal into neurosporaxanthin. The chain is Bifunctional lycopene cyclase/phytoene synthase from Gibberella fujikuroi (strain CBS 195.34 / IMI 58289 / NRRL A-6831) (Bakanae and foot rot disease fungus).